The sequence spans 329 residues: Biotin synthase (329 aa).

The region spanning 46–275 is the Radical SAM core domain; that stretch reads FFGRRLKLVR…LNPKAELRAS (230 aa). Cys-64, Cys-68, and Cys-71 together coordinate [4Fe-4S] cluster. Residues Cys-108, Cys-140, Cys-200, and Arg-273 each coordinate [2Fe-2S] cluster.

Belongs to the radical SAM superfamily. Biotin synthase family. Homodimer. The cofactor is [4Fe-4S] cluster. It depends on [2Fe-2S] cluster as a cofactor.

The catalysed reaction is (4R,5S)-dethiobiotin + (sulfur carrier)-SH + 2 reduced [2Fe-2S]-[ferredoxin] + 2 S-adenosyl-L-methionine = (sulfur carrier)-H + biotin + 2 5'-deoxyadenosine + 2 L-methionine + 2 oxidized [2Fe-2S]-[ferredoxin]. It participates in cofactor biosynthesis; biotin biosynthesis; biotin from 7,8-diaminononanoate: step 2/2. Its function is as follows. Catalyzes the conversion of dethiobiotin (DTB) to biotin by the insertion of a sulfur atom into dethiobiotin via a radical-based mechanism. This chain is Biotin synthase, found in Thermus thermophilus (strain ATCC BAA-163 / DSM 7039 / HB27).